Reading from the N-terminus, the 644-residue chain is Exoribonuclease 2 (644 aa).

Residues 189–516 (RQDLTALNFV…NHRLLKAVIK (328 aa)) enclose the RNB domain. The 83-residue stretch at 561 to 643 (NTRFAAEIID…ETRSIIARPA (83 aa)) folds into the S1 motif domain.

Belongs to the RNR ribonuclease family. RNase II subfamily.

It localises to the cytoplasm. The enzyme catalyses Exonucleolytic cleavage in the 3'- to 5'-direction to yield nucleoside 5'-phosphates.. Functionally, involved in mRNA degradation. Hydrolyzes single-stranded polyribonucleotides processively in the 3' to 5' direction. The sequence is that of Exoribonuclease 2 from Salmonella choleraesuis (strain SC-B67).